The following is a 116-amino-acid chain: DNA polymerase epsilon subunit 4 (116 aa).

The segment covering 1-10 (MAAAAPGSGA) has biased composition (low complexity). A disordered region spans residues 1-36 (MAAAAPGSGAAREEEGTGGDAATPQPPAPTSAPGAR).

As to quaternary structure, component of the DNA polymerase epsilon complex consisting of four subunits: the catalytic subunit POLE and the accessory subunits POLE2, POLE3 and POLE4. Interaction with POLE3 is a prerequisite for further binding with POLE and POLE2.

The protein localises to the nucleus. In terms of biological role, accessory component of the DNA polymerase epsilon complex. Participates in DNA repair and in chromosomal DNA replication. This Bos taurus (Bovine) protein is DNA polymerase epsilon subunit 4 (POLE4).